Reading from the N-terminus, the 485-residue chain is Probable glycine dehydrogenase (decarboxylating) subunit 2 (485 aa).

Lys-269 carries the N6-(pyridoxal phosphate)lysine modification.

It belongs to the GcvP family. C-terminal subunit subfamily. The glycine cleavage system is composed of four proteins: P, T, L and H. In this organism, the P 'protein' is a heterodimer of two subunits. The cofactor is pyridoxal 5'-phosphate.

The catalysed reaction is N(6)-[(R)-lipoyl]-L-lysyl-[glycine-cleavage complex H protein] + glycine + H(+) = N(6)-[(R)-S(8)-aminomethyldihydrolipoyl]-L-lysyl-[glycine-cleavage complex H protein] + CO2. In terms of biological role, the glycine cleavage system catalyzes the degradation of glycine. The P protein binds the alpha-amino group of glycine through its pyridoxal phosphate cofactor; CO(2) is released and the remaining methylamine moiety is then transferred to the lipoamide cofactor of the H protein. The polypeptide is Probable glycine dehydrogenase (decarboxylating) subunit 2 (Chlorobium phaeovibrioides (strain DSM 265 / 1930) (Prosthecochloris vibrioformis (strain DSM 265))).